A 675-amino-acid chain; its full sequence is L-type lectin-domain containing receptor kinase IV.1 (675 aa).

Residues 1-22 (MFLKLLTIFFFFFFNLIFQSSS) form the signal peptide. Over 23 to 291 (QSLNFAYNNG…EPKRISEFYK (269 aa)) the chain is Extracellular. Residues 25 to 261 (LNFAYNNGFN…SEHYILGWSF (237 aa)) are legume-lectin like. N-linked (GlcNAc...) asparagine glycans are attached at residues Asn57, Asn79, Asn112, Asn134, Asn153, and Asn186. A helical membrane pass occupies residues 292-312 (IGMPLISLFLIFSFIFLVCYI). Topologically, residues 313-675 (VRRRRKFAEE…IADSQLSGGR (363 aa)) are cytoplasmic. Residues 347–624 (FKEKGLLGTG…LHYLRGDAKL (278 aa)) enclose the Protein kinase domain. Residues 353-361 (LGTGGFGSV) and Lys376 contribute to the ATP site. The Proton acceptor role is filled by Asp472.

The protein in the C-terminal section; belongs to the protein kinase superfamily. Ser/Thr protein kinase family. It in the N-terminal section; belongs to the leguminous lectin family.

The protein resides in the membrane. The catalysed reaction is L-seryl-[protein] + ATP = O-phospho-L-seryl-[protein] + ADP + H(+). The enzyme catalyses L-threonyl-[protein] + ATP = O-phospho-L-threonyl-[protein] + ADP + H(+). The protein is L-type lectin-domain containing receptor kinase IV.1 (LECRK41) of Arabidopsis thaliana (Mouse-ear cress).